Here is a 418-residue protein sequence, read N- to C-terminus: L-rhamnose isomerase (418 aa).

Residues His-262, Asp-294, and Asp-296 each coordinate Mn(2+).

This sequence belongs to the rhamnose isomerase family. As to quaternary structure, homotetramer. It depends on Mn(2+) as a cofactor.

It is found in the cytoplasm. The enzyme catalyses L-rhamnopyranose = L-rhamnulose. It functions in the pathway carbohydrate degradation; L-rhamnose degradation; glycerone phosphate from L-rhamnose: step 1/3. Functionally, catalyzes the interconversion of L-rhamnose and L-rhamnulose. The protein is L-rhamnose isomerase of Yersinia pseudotuberculosis serotype IB (strain PB1/+).